The chain runs to 366 residues: tRNA(Met) cytidine acetate ligase (366 aa).

ATP-binding positions include 7-20 (IAEFNPFHYGHQYL), Gly-96, Asn-152, and Arg-175.

It belongs to the TmcAL family.

The protein localises to the cytoplasm. It carries out the reaction cytidine(34) in elongator tRNA(Met) + acetate + ATP = N(4)-acetylcytidine(34) in elongator tRNA(Met) + AMP + diphosphate. Its function is as follows. Catalyzes the formation of N(4)-acetylcytidine (ac(4)C) at the wobble position of elongator tRNA(Met), using acetate and ATP as substrates. First activates an acetate ion to form acetyladenylate (Ac-AMP) and then transfers the acetyl group to tRNA to form ac(4)C34. This chain is tRNA(Met) cytidine acetate ligase, found in Streptococcus equi subsp. zooepidemicus (strain H70).